The sequence spans 102 residues: Small ribosomal subunit protein uS10 (102 aa).

This sequence belongs to the universal ribosomal protein uS10 family. Part of the 30S ribosomal subunit.

Its function is as follows. Involved in the binding of tRNA to the ribosomes. This chain is Small ribosomal subunit protein uS10, found in Paramagnetospirillum magneticum (strain ATCC 700264 / AMB-1) (Magnetospirillum magneticum).